The chain runs to 443 residues: Alpha-amylase (443 aa).

A signal peptide spans 1–24 (MHNTLFRTALLAAALGSFSHTASA). Substrate-binding residues include histidine 114 and arginine 196. Residue aspartate 198 is the Nucleophile of the active site. Residue 201–202 (KH) participates in substrate binding. Residue glutamate 223 is the Proton donor of the active site. Glycine 228 and histidine 287 together coordinate substrate.

Belongs to the glycosyl hydrolase 13 family.

The protein resides in the secreted. The enzyme catalyses Endohydrolysis of (1-&gt;4)-alpha-D-glucosidic linkages in polysaccharides containing three or more (1-&gt;4)-alpha-linked D-glucose units.. The sequence is that of Alpha-amylase (amyA) from Aeromonas hydrophila.